A 513-amino-acid chain; its full sequence is Sugar transport protein MST8 (513 aa).

At 1 to 17 the chain is on the cytoplasmic side; the sequence is MAGGAMTDTDGAHKNYP. Residues 18-38 form a helical membrane-spanning segment; sequence GKMTIFVFLACLVASSGGLIF. The Extracellular portion of the chain corresponds to 39-81; that stretch reads GYDIGISGGVTSMDSFLIKFFPSVYAKEKEMVETNQYCKFDSE. A helical transmembrane segment spans residues 82–102; the sequence is LLTLFTSSLYLAALIASLFAS. Over 103-116 the chain is Cytoplasmic; sequence VITRKFGRRITMLG. The helical transmembrane segment at 117-137 threads the bilayer; it reads GGVIFLVGAILNGAAADVAML. Topologically, residues 138 to 139 are extracellular; it reads II. The chain crosses the membrane as a helical span at residues 140-160; it reads GRILLGIGVGFSNQAVPLYLS. The Cytoplasmic portion of the chain corresponds to 161-166; it reads EMAPAR. Residues 167 to 187 form a helical membrane-spanning segment; the sequence is MRGMLNISFQLMITVGILAAN. Residues 188–201 lie on the Extracellular side of the membrane; that stretch reads LINYFTDKIAGGWG. Residues 202–222 form a helical membrane-spanning segment; the sequence is WRVSLGLAAVPAVIMAGGSLF. The Cytoplasmic portion of the chain corresponds to 223-294; sequence LPDTPNSLLS…LVMSVLIPTL (72 aa). Residues 295–315 form a helical membrane-spanning segment; that stretch reads QQLTGINVVMFYAPVLFKTIG. Residues 316–320 are Extracellular-facing; sequence FGGTA. The chain crosses the membrane as a helical span at residues 321–341; it reads SLMSAVITGLVNMFATFVSIA. The Cytoplasmic segment spans residues 342–347; that stretch reads TVDRLG. The helical transmembrane segment at 348–368 threads the bilayer; sequence RRKLLLQGGVQMIFAQFILGT. At 369-385 the chain is on the extracellular side; it reads LIAVKFGTAGVANISRG. The helical transmembrane segment at 386 to 406 threads the bilayer; sequence YAIVVVLCICVFVSAFAWSWG. The Cytoplasmic segment spans residues 407–425; the sequence is PLGWLVPSEIFPLEIRSAA. A helical membrane pass occupies residues 426–446; the sequence is QSVVVVFNMAFTFIIAQIFLM. Topologically, residues 447–450 are extracellular; sequence MLCH. A helical transmembrane segment spans residues 451-471; that stretch reads LKFGLFYFFGAMELIMTGFVF. Topologically, residues 472–512 are cytoplasmic; that stretch reads FFLPETKGIPIEEMDRIWGKHWYWRRFVGAGAGGKVEITST.

The protein belongs to the major facilitator superfamily. Sugar transporter (TC 2.A.1.1) family. Expressed specifically in anthers.

It localises to the membrane. Its function is as follows. Mediates active uptake of hexoses by sugar:proton symport. May play an important role in transporting monosaccharides during anther development. In Oryza sativa subsp. japonica (Rice), this protein is Sugar transport protein MST8.